A 139-amino-acid chain; its full sequence is MRIMGLDVGSKTVGVAISDPLGFTAQGLEIIPIHEEKGEFGLERLGELVKEYKVDKFVIGLPKNMNNTSGPRVEASQAYGQRIAELFGLPVDYQDERLTTVAAERMLVEQADISRSKRKKVIDKLAAQLILQNYLDRNF.

Belongs to the YqgF nuclease family.

It localises to the cytoplasm. Functionally, could be a nuclease involved in processing of the 5'-end of pre-16S rRNA. This is Putative pre-16S rRNA nuclease from Streptococcus sanguinis (strain SK36).